The primary structure comprises 527 residues: 2-isopropylmalate synthase (527 aa).

In terms of domain architecture, Pyruvate carboxyltransferase spans Ile-18–Val-280. Mn(2+)-binding residues include Asp-27, His-215, His-217, and Asn-251. The tract at residues Thr-405 to Pro-527 is regulatory domain.

It belongs to the alpha-IPM synthase/homocitrate synthase family. LeuA type 1 subfamily. As to quaternary structure, homodimer. Requires Mn(2+) as cofactor.

The protein localises to the cytoplasm. The enzyme catalyses 3-methyl-2-oxobutanoate + acetyl-CoA + H2O = (2S)-2-isopropylmalate + CoA + H(+). It functions in the pathway amino-acid biosynthesis; L-leucine biosynthesis; L-leucine from 3-methyl-2-oxobutanoate: step 1/4. In terms of biological role, catalyzes the condensation of the acetyl group of acetyl-CoA with 3-methyl-2-oxobutanoate (2-ketoisovalerate) to form 3-carboxy-3-hydroxy-4-methylpentanoate (2-isopropylmalate). This chain is 2-isopropylmalate synthase, found in Rhodopirellula baltica (strain DSM 10527 / NCIMB 13988 / SH1).